Here is a 908-residue protein sequence, read N- to C-terminus: Chloride channel protein 2 (908 aa).

Topologically, residues 1–95 are cytoplasmic; sequence MAAATAAAAA…RCHKFLVSRV (95 aa). Residues 24 to 42 are essential for channel gating by both voltage and cell volume; that stretch reads QYEQTLMYGRYTQELGAFA. At T28 the chain carries Phosphothreonine. Positions 44–57 are modulates channel gating by both voltage and cell volume; sequence EEAARIRLGGPEPW. 2 consecutive transmembrane segments (helical) span residues 96–129 and 138–163; these read GEDWIFLVLLGLLMALVSWAMDYAIAVCLQAQQW and ILLQYLAWVTYPVVLITFSAGFTQIL. The Selectivity filter part_1 motif lies at 169–173; it reads GSGIP. Residue S170 participates in chloride binding. Residues 172-179 constitute an intramembrane region (helical); it reads IPEMKTIL. 2 helical membrane passes run 188 to 206 and 213 to 231; these read LTLKTFVAKVIGLTCALGS and EGPFVHIASMCAALLSKFL. Positions 211-215 match the Selectivity filter part_2 motif; the sequence is GKEGP. 2 consecutive intramembrane regions (helical) follow at residues 247–259 and 263–271; these read MLAAACAVGVGCC and PIGGVLFSI. The next 5 helical transmembrane spans lie at 283–303, 329–357, 366–385, 437–457, and 465–488; these read YWRGFFAATFSAFIFRVLAVW, LPAFAVIGIASGFGGALFVYLNRKIVQVM, FLMRKRLLFPALVTLLISTL, ANVFLTLVIFILMKFWMSALA, and GAFMPVFVIGAAFGRLVGESMAAW. Residues 465–469 carry the Selectivity filter part_3 motif; that stretch reads GAFMP. F467 is a chloride binding site. Residues 505–519 constitute an intramembrane region (helical); it reads GGYAVVGAAALAGAV. The segment at residues 520–521 is an intramembrane region (note=Loop between two helices); that stretch reads TH. Positions 522 to 533 form an intramembrane region, helical; it reads TVSTAVIVFELT. The segment at residues 534–538 is an intramembrane region (note=Loop between two helices); the sequence is GQIAH. A helical membrane pass occupies residues 539-556; sequence ILPVMIAVILANAVAQSL. Over 557–908 the chain is Cytoplasmic; that stretch reads QPSLYDSIIR…TPSDSDDKCQ (352 aa). Y561 contributes to the chloride binding site. The CBS 1 domain occupies 592–650; that stretch reads MVRDVPHVALSCTFRDLRLALHRTKGRMLALVESPESMILLGSIERSQVVALLGAQLSP. Residues 653–662 show a composition bias toward basic residues; sequence RRQHMQKLRK. The disordered stretch occupies residues 653–722; the sequence is RRQHMQKLRK…NSTSLQEGTT (70 aa). The span at 666-680 shows a compositional bias: low complexity; that stretch reads SPPSDQESPPSSETS. Over residues 681–690 the composition is skewed to polar residues; that stretch reads IRFQVNTEDS. The segment covering 698-707 has biased composition (basic residues); the sequence is QTHKPLKPAL. Residues 711-722 show a composition bias toward polar residues; the sequence is PSNSTSLQEGTT. S768 carries the phosphoserine modification. Positions 800–860 constitute a CBS 2 domain; that stretch reads IDPAPFQLVE…GSVTAQGVKV (61 aa). The Basolateral membrane sorting signature appears at 822-823; the sequence is LL. Residues 866-908 are disordered; it reads SFRDSATSSSDTETTEVHALWGPRSRHGLPREGTPSDSDDKCQ.

Belongs to the chloride channel (TC 2.A.49) family. ClC-2/CLCN2 subfamily. Homodimer. Interacts with auxiliary subunit HEPACAM. Post-translationally, phosphorylated. Activated by dephosphorylation. Expressed in the adrenal gland and brain. Expressed in intestinal epithelium (at protein level). Expressed in salivary gland (at protein level).

Its subcellular location is the cell membrane. It is found in the myelin membrane. The protein localises to the basolateral cell membrane. It localises to the cell projection. The protein resides in the dendritic spine membrane. Its subcellular location is the axon. The catalysed reaction is chloride(in) = chloride(out). The enzyme catalyses thiocyanate(in) = thiocyanate(out). It catalyses the reaction bromide(in) = bromide(out). It carries out the reaction nitrate(in) = nitrate(out). The catalysed reaction is iodide(out) = iodide(in). Its activity is regulated as follows. Common gate kinetics are down-regulated by intracellular ATP. Inhibited by AK-42, a derivative of meclofenamate. Inhibited by Cd(2+). Inhibited by Zn(2+) and PKC activation. Inhibited at acidic pH. CCLN2:HEPACAM channel conductance is up-regulated upon hypo-osmolarity. In terms of biological role, voltage-gated and osmosensitive chloride channel. Forms a homodimeric channel where each subunit has its own ion conduction pathway. Conducts double-barreled currents controlled by two types of gates, two fast glutamate gates that control each subunit independently and a slow common gate that opens and shuts off both subunits simultaneously. Displays inward rectification currents activated upon membrane hyperpolarization and extracellular hypotonicity. Contributes to chloride conductance involved in neuron excitability. In hippocampal neurons, generates a significant part of resting membrane conductance and provides an additional chloride efflux pathway to prevent chloride accumulation in dendrites upon GABA receptor activation. In glia, associates with the auxiliary subunit HEPACAM/GlialCAM at astrocytic processes and myelinated fiber tracts where it may regulate transcellular chloride flux buffering extracellular chloride and potassium concentrations. Regulates aldosterone production in adrenal glands. The opening of CLCN2 channels at hyperpolarized membrane potentials in the glomerulosa causes cell membrane depolarization, activation of voltage-gated calcium channels and increased expression of aldosterone synthase, the rate-limiting enzyme for aldosterone biosynthesis. Contributes to chloride conductance in retinal pigment epithelium involved in phagocytosis of shed photoreceptor outer segments and photoreceptor renewal. Conducts chloride currents at the basolateral membrane of epithelial cells with a role in chloride reabsorption rather than secretion. Permeable to small monovalent anions with chloride &gt; thiocyanate &gt; bromide &gt; nitrate &gt; iodide ion selectivity. The sequence is that of Chloride channel protein 2 (Clcn2) from Mus musculus (Mouse).